The chain runs to 195 residues: Probable molybdenum cofactor guanylyltransferase (195 aa).

GTP is bound by residues 9–11, Lys-21, Asp-69, and Asp-100; that span reads LAG. Position 100 (Asp-100) interacts with Mg(2+).

Belongs to the MobA family. The cofactor is Mg(2+).

The protein resides in the cytoplasm. It carries out the reaction Mo-molybdopterin + GTP + H(+) = Mo-molybdopterin guanine dinucleotide + diphosphate. Transfers a GMP moiety from GTP to Mo-molybdopterin (Mo-MPT) cofactor (Moco or molybdenum cofactor) to form Mo-molybdopterin guanine dinucleotide (Mo-MGD) cofactor. The sequence is that of Probable molybdenum cofactor guanylyltransferase from Geobacillus sp. (strain WCH70).